We begin with the raw amino-acid sequence, 381 residues long: Probable tRNA sulfurtransferase (381 aa).

Residues 55 to 163 (GECLENLNKV…DDEAFIYHEK (109 aa)) enclose the THUMP domain. Residues 181–182 (LV), K265, G287, and Q296 contribute to the ATP site.

Belongs to the ThiI family.

It localises to the cytoplasm. It carries out the reaction [ThiI sulfur-carrier protein]-S-sulfanyl-L-cysteine + a uridine in tRNA + 2 reduced [2Fe-2S]-[ferredoxin] + ATP + H(+) = [ThiI sulfur-carrier protein]-L-cysteine + a 4-thiouridine in tRNA + 2 oxidized [2Fe-2S]-[ferredoxin] + AMP + diphosphate. It catalyses the reaction [ThiS sulfur-carrier protein]-C-terminal Gly-Gly-AMP + S-sulfanyl-L-cysteinyl-[cysteine desulfurase] + AH2 = [ThiS sulfur-carrier protein]-C-terminal-Gly-aminoethanethioate + L-cysteinyl-[cysteine desulfurase] + A + AMP + 2 H(+). The protein operates within cofactor biosynthesis; thiamine diphosphate biosynthesis. Its function is as follows. Catalyzes the ATP-dependent transfer of a sulfur to tRNA to produce 4-thiouridine in position 8 of tRNAs, which functions as a near-UV photosensor. Also catalyzes the transfer of sulfur to the sulfur carrier protein ThiS, forming ThiS-thiocarboxylate. This is a step in the synthesis of thiazole, in the thiamine biosynthesis pathway. The sulfur is donated as persulfide by IscS. This chain is Probable tRNA sulfurtransferase, found in Methanobrevibacter smithii (strain ATCC 35061 / DSM 861 / OCM 144 / PS).